We begin with the raw amino-acid sequence, 692 residues long: Elongation factor G (692 aa).

A tr-type G domain is found at 9-284 (HKVRNIGIAA…AVVDYLPAPD (276 aa)). Residues 18–25 (AHIDAGKT), 82–86 (DTPGH), and 136–139 (NKMD) contribute to the GTP site.

Belongs to the TRAFAC class translation factor GTPase superfamily. Classic translation factor GTPase family. EF-G/EF-2 subfamily.

Its subcellular location is the cytoplasm. Catalyzes the GTP-dependent ribosomal translocation step during translation elongation. During this step, the ribosome changes from the pre-translocational (PRE) to the post-translocational (POST) state as the newly formed A-site-bound peptidyl-tRNA and P-site-bound deacylated tRNA move to the P and E sites, respectively. Catalyzes the coordinated movement of the two tRNA molecules, the mRNA and conformational changes in the ribosome. This chain is Elongation factor G, found in Campylobacter concisus (strain 13826).